We begin with the raw amino-acid sequence, 689 residues long: Glycine--tRNA ligase beta subunit (689 aa).

It belongs to the class-II aminoacyl-tRNA synthetase family. Tetramer of two alpha and two beta subunits.

The protein localises to the cytoplasm. The catalysed reaction is tRNA(Gly) + glycine + ATP = glycyl-tRNA(Gly) + AMP + diphosphate. This is Glycine--tRNA ligase beta subunit from Shigella boydii serotype 18 (strain CDC 3083-94 / BS512).